We begin with the raw amino-acid sequence, 552 residues long: Sensor histidine kinase DpiB (552 aa).

The Cytoplasmic portion of the chain corresponds to 1–21 (MLQLNENKQFAFFQRLAFPLR). Residues 22–42 (IFLLILVFSIFVIAALAQYFT) form a helical membrane-spanning segment. At 43–182 (ASFEDYLTLH…DSWRAEFLLP (140 aa)) the chain is on the periplasmic side. The chain crosses the membrane as a helical span at residues 183 to 203 (MAGVFVVLLGILMLLSWFLAA). The Cytoplasmic segment spans residues 204 to 552 (HIRRQMMGME…NDSSINPIDR (349 aa)). Residues 222-292 (RQQEALFSSV…IDEKRQDVVA (71 aa)) enclose the PAS domain. The region spanning 344 to 541 (TLRHEHLNWM…LFSIYIPKVK (198 aa)) is the Histidine kinase domain. Residue His-347 is modified to Phosphohistidine; by autocatalysis.

In terms of processing, autophosphorylated.

The protein localises to the cell inner membrane. It carries out the reaction ATP + protein L-histidine = ADP + protein N-phospho-L-histidine.. Its activity is regulated as follows. Autophosphorylation is induced in vitro by dithiothreitol (DTT). Functionally, member of the two-component regulatory system DpiA/DpiB, which is essential for expression of citrate-specific fermentation genes and genes involved in plasmid inheritance. Could be involved in response to both the presence of citrate and external redox conditions. Functions as a sensor kinase that phosphorylates DpiA in the presence of citrate. This is Sensor histidine kinase DpiB (dpiB) from Escherichia coli (strain K12).